A 964-amino-acid polypeptide reads, in one-letter code: Cycloisomaltooligosaccharide glucanotransferase (964 aa).

An N-terminal signal peptide occupies residues 1–30; that stretch reads MRVKILPLVFMTLLLIVPSQMLLPSGQANA. 2 CBM6 domains span residues 413–538 and 740–863; these read DRYE…LTLG and NMYE…LKLD.

This sequence belongs to the glycosyl hydrolase 66 family.

It catalyses the reaction cyclizes part of a (1-&gt;6)-alpha-D-glucan chain by formation of a (1-&gt;6)-alpha-D-glucosidic bond.. Functionally, produces cycloisomaltooligosaccharide from dextran. This chain is Cycloisomaltooligosaccharide glucanotransferase (cit), found in Niallia circulans (Bacillus circulans).